We begin with the raw amino-acid sequence, 339 residues long: Cyclin-D1-1 (339 aa).

Belongs to the cyclin family. Cyclin D subfamily. As to quaternary structure, interacts with CDKA-1 and KRP6/ICK4. Expressed in roots, leaves and flowers.

Functionally, may activate cell cycle in the root apical meristem (RAM) and promote embryonic root (radicle) protrusion. The polypeptide is Cyclin-D1-1 (CYCD1-1) (Arabidopsis thaliana (Mouse-ear cress)).